Reading from the N-terminus, the 171-residue chain is NADH-ubiquinone oxidoreductase chain 6 (171 aa).

5 consecutive transmembrane segments (helical) span residues 1–21 (MYVMFLLSILLVLGFVSISSK), 25–44 (IYGGVGLIVSGAVGCGIIMG), 49–71 (FMGLMVFLIYLGGMLVVFGYTTA), 85–105 (VVIWGVVLLGVGMELFMVAWM), and 150–170 (WFAAIAGWSLFISVLIVIEII).

This sequence belongs to the complex I subunit 6 family. In terms of assembly, core subunit of respiratory chain NADH dehydrogenase (Complex I) which is composed of 45 different subunits.

The protein localises to the mitochondrion inner membrane. It carries out the reaction a ubiquinone + NADH + 5 H(+)(in) = a ubiquinol + NAD(+) + 4 H(+)(out). Its function is as follows. Core subunit of the mitochondrial membrane respiratory chain NADH dehydrogenase (Complex I) which catalyzes electron transfer from NADH through the respiratory chain, using ubiquinone as an electron acceptor. Essential for the catalytic activity and assembly of complex I. This is NADH-ubiquinone oxidoreductase chain 6 (MT-ND6) from Lemur catta (Ring-tailed lemur).